The chain runs to 176 residues: Ribosome rescue factor SmrB (176 aa).

The Smr domain maps to 97 to 172 (LDMHGMTQQE…GDGALLVLLS (76 aa)).

This sequence belongs to the SmrB family. As to quaternary structure, associates with collided ribosomes, but not with correctly translating polysomes.

Its function is as follows. Acts as a ribosome collision sensor. Detects stalled/collided disomes (pairs of ribosomes where the leading ribosome is stalled and a second ribosome has collided with it) and endonucleolytically cleaves mRNA at the 5' boundary of the stalled ribosome. Stalled/collided disomes form a new interface (primarily via the 30S subunits) that binds SmrB. Cleaved mRNA becomes available for tmRNA ligation, leading to ribosomal subunit dissociation and rescue of stalled ribosomes. The sequence is that of Ribosome rescue factor SmrB from Vibrio campbellii (strain ATCC BAA-1116).